Here is a 458-residue protein sequence, read N- to C-terminus: Bifunctional protein GlmU (458 aa).

The pyrophosphorylase stretch occupies residues 1–230 (MENRYAIILA…FDEAMGVNDR (230 aa)). Residues 9–12 (LAAG), Lys-23, Gln-73, and 78–79 (GT) each bind UDP-N-acetyl-alpha-D-glucosamine. Asp-103 contacts Mg(2+). UDP-N-acetyl-alpha-D-glucosamine is bound by residues Gly-140, Glu-155, Asn-170, and Asn-228. Residue Asn-228 participates in Mg(2+) binding. The tract at residues 231–251 (VALSTANKIMHRRLNEMHMRN) is linker. The tract at residues 252–458 (GVTFIDPDTT…YAKKLPYMKD (207 aa)) is N-acetyltransferase. Residues Arg-333 and Lys-351 each contribute to the UDP-N-acetyl-alpha-D-glucosamine site. His-363 serves as the catalytic Proton acceptor. Residues Tyr-366 and Asn-377 each contribute to the UDP-N-acetyl-alpha-D-glucosamine site. Residues 386–387 (NY), Ser-405, Ala-423, and Arg-440 each bind acetyl-CoA.

This sequence in the N-terminal section; belongs to the N-acetylglucosamine-1-phosphate uridyltransferase family. In the C-terminal section; belongs to the transferase hexapeptide repeat family. Homotrimer. The cofactor is Mg(2+).

The protein localises to the cytoplasm. It carries out the reaction alpha-D-glucosamine 1-phosphate + acetyl-CoA = N-acetyl-alpha-D-glucosamine 1-phosphate + CoA + H(+). The enzyme catalyses N-acetyl-alpha-D-glucosamine 1-phosphate + UTP + H(+) = UDP-N-acetyl-alpha-D-glucosamine + diphosphate. It functions in the pathway nucleotide-sugar biosynthesis; UDP-N-acetyl-alpha-D-glucosamine biosynthesis; N-acetyl-alpha-D-glucosamine 1-phosphate from alpha-D-glucosamine 6-phosphate (route II): step 2/2. The protein operates within nucleotide-sugar biosynthesis; UDP-N-acetyl-alpha-D-glucosamine biosynthesis; UDP-N-acetyl-alpha-D-glucosamine from N-acetyl-alpha-D-glucosamine 1-phosphate: step 1/1. It participates in bacterial outer membrane biogenesis; LPS lipid A biosynthesis. Its function is as follows. Catalyzes the last two sequential reactions in the de novo biosynthetic pathway for UDP-N-acetylglucosamine (UDP-GlcNAc). The C-terminal domain catalyzes the transfer of acetyl group from acetyl coenzyme A to glucosamine-1-phosphate (GlcN-1-P) to produce N-acetylglucosamine-1-phosphate (GlcNAc-1-P), which is converted into UDP-GlcNAc by the transfer of uridine 5-monophosphate (from uridine 5-triphosphate), a reaction catalyzed by the N-terminal domain. The protein is Bifunctional protein GlmU of Enterococcus faecalis (strain ATCC 700802 / V583).